A 451-amino-acid polypeptide reads, in one-letter code: tRNA-2-methylthio-N(6)-dimethylallyladenosine synthase (451 aa).

The MTTase N-terminal domain maps to Q2–A119. [4Fe-4S] cluster is bound by residues C11, C48, C82, C157, C161, and C164. Residues G143–A377 form the Radical SAM core domain. The region spanning Q378–L441 is the TRAM domain.

The protein belongs to the methylthiotransferase family. MiaB subfamily. Monomer. [4Fe-4S] cluster serves as cofactor.

It localises to the cytoplasm. It carries out the reaction N(6)-dimethylallyladenosine(37) in tRNA + (sulfur carrier)-SH + AH2 + 2 S-adenosyl-L-methionine = 2-methylsulfanyl-N(6)-dimethylallyladenosine(37) in tRNA + (sulfur carrier)-H + 5'-deoxyadenosine + L-methionine + A + S-adenosyl-L-homocysteine + 2 H(+). Functionally, catalyzes the methylthiolation of N6-(dimethylallyl)adenosine (i(6)A), leading to the formation of 2-methylthio-N6-(dimethylallyl)adenosine (ms(2)i(6)A) at position 37 in tRNAs that read codons beginning with uridine. The sequence is that of tRNA-2-methylthio-N(6)-dimethylallyladenosine synthase from Acidithiobacillus ferrooxidans (strain ATCC 23270 / DSM 14882 / CIP 104768 / NCIMB 8455) (Ferrobacillus ferrooxidans (strain ATCC 23270)).